A 450-amino-acid chain; its full sequence is Exodeoxyribonuclease 7 large subunit (450 aa).

It belongs to the XseA family. As to quaternary structure, heterooligomer composed of large and small subunits.

It localises to the cytoplasm. The enzyme catalyses Exonucleolytic cleavage in either 5'- to 3'- or 3'- to 5'-direction to yield nucleoside 5'-phosphates.. Functionally, bidirectionally degrades single-stranded DNA into large acid-insoluble oligonucleotides, which are then degraded further into small acid-soluble oligonucleotides. This Listeria innocua serovar 6a (strain ATCC BAA-680 / CLIP 11262) protein is Exodeoxyribonuclease 7 large subunit.